Consider the following 249-residue polypeptide: 5'-nucleotidase SurE (249 aa).

The a divalent metal cation site is built by Asp9, Asp10, Ser40, and Asn92.

This sequence belongs to the SurE nucleotidase family. A divalent metal cation is required as a cofactor.

The protein resides in the cytoplasm. The catalysed reaction is a ribonucleoside 5'-phosphate + H2O = a ribonucleoside + phosphate. Nucleotidase that shows phosphatase activity on nucleoside 5'-monophosphates. The chain is 5'-nucleotidase SurE from Shewanella sp. (strain MR-4).